The sequence spans 89 residues: Otospiralin (89 aa).

The first 21 residues, 1–21 (MQPCVLWWLALGLLLGIPAGA), serve as a signal peptide directing secretion.

It belongs to the otospiralin family. Ear specific. Expressed in the cochlea and vestibule, but not in the cochlear nerve, cochlear nucleus, spinal chord, muscle, cerebral cortex, cerebellum, diencephalon and olfactory bulb. In the cochlea, expressed in fibrocytes of the spiral limbus, spiral ligament and suprastrial zone. In the vestibule, expressed in cells located to the stroma below the macular and crista sensory epithelia and in the subepithelial layer of the walls of semicircular canals and maculae.

The protein localises to the secreted. In terms of biological role, may be essential for the survival of the neurosensory epithelium of the inner ear. The protein is Otospiralin (Otos) of Rattus norvegicus (Rat).